The primary structure comprises 228 residues: Phosphoglycolate phosphatase (228 aa).

Aspartate 12 functions as the Nucleophile in the catalytic mechanism. Residues aspartate 12, aspartate 14, and aspartate 177 each contribute to the Mg(2+) site.

Belongs to the HAD-like hydrolase superfamily. CbbY/CbbZ/Gph/YieH family. Mg(2+) serves as cofactor.

It catalyses the reaction 2-phosphoglycolate + H2O = glycolate + phosphate. It functions in the pathway organic acid metabolism; glycolate biosynthesis; glycolate from 2-phosphoglycolate: step 1/1. Specifically catalyzes the dephosphorylation of 2-phosphoglycolate. Is involved in the dissimilation of the intracellular 2-phosphoglycolate formed during the DNA repair of 3'-phosphoglycolate ends, a major class of DNA lesions induced by oxidative stress. The protein is Phosphoglycolate phosphatase of Vibrio vulnificus (strain CMCP6).